A 153-amino-acid polypeptide reads, in one-letter code: Superoxide dismutase [Cu-Zn] (153 aa).

3 residues coordinate Cu cation: His46, His48, and His63. Cys57 and Cys146 form a disulfide bridge. Positions 61 to 80 (GPHFNPFGKEHGAPEDENRH) are disordered. Residues His63, His71, His80, and Asp83 each contribute to the Zn(2+) site. Positions 68–80 (GKEHGAPEDENRH) are enriched in basic and acidic residues. His120 lines the Cu cation pocket. Over residues 124–136 (DDLGRSEHPESKK) the composition is skewed to basic and acidic residues. A disordered region spans residues 124-143 (DDLGRSEHPESKKTGNAGAR). Arg143 is a substrate binding site.

This sequence belongs to the Cu-Zn superoxide dismutase family. As to quaternary structure, homodimer. Requires Cu cation as cofactor. The cofactor is Zn(2+).

Its subcellular location is the cytoplasm. The catalysed reaction is 2 superoxide + 2 H(+) = H2O2 + O2. Its function is as follows. Destroys radicals which are normally produced within the cells and which are toxic to biological systems. This chain is Superoxide dismutase [Cu-Zn] (sodC), found in Aspergillus flavus.